The primary structure comprises 356 residues: S-adenosylmethionine:tRNA ribosyltransferase-isomerase (356 aa).

The protein belongs to the QueA family. Monomer.

The protein resides in the cytoplasm. It catalyses the reaction 7-aminomethyl-7-carbaguanosine(34) in tRNA + S-adenosyl-L-methionine = epoxyqueuosine(34) in tRNA + adenine + L-methionine + 2 H(+). The protein operates within tRNA modification; tRNA-queuosine biosynthesis. Its function is as follows. Transfers and isomerizes the ribose moiety from AdoMet to the 7-aminomethyl group of 7-deazaguanine (preQ1-tRNA) to give epoxyqueuosine (oQ-tRNA). The chain is S-adenosylmethionine:tRNA ribosyltransferase-isomerase from Yersinia pseudotuberculosis serotype O:3 (strain YPIII).